The primary structure comprises 219 residues: Lipid transferase CIDEB (219 aa).

One can recognise a CIDE-N domain in the interval 33 to 110; that stretch reads PRQRPFRVCD…VLELGQSWSP (78 aa).

Belongs to the CIDE family. Interacts with DFFA. Interacts with DFFB; inhibited by DFFB. Interacts with APOB. Interacts with PREB/SEC12; facilitating loading of SCAP-SREBP into COPII vesicles.

The protein localises to the lipid droplet. It localises to the endoplasmic reticulum membrane. It is found in the golgi apparatus. Its subcellular location is the cytoplasmic vesicle. The protein resides in the COPI-coated vesicle. Functionally, lipid transferase specifically expressed in hepatocytes, which promotes unilocular lipid droplet formation by mediating lipid droplet fusion. Lipid droplet fusion promotes their enlargement, restricting lipolysis and favoring lipid storage. Localizes on the lipid droplet surface, at focal contact sites between lipid droplets, and mediates atypical lipid droplet fusion by promoting directional net neutral lipid transfer from the smaller to larger lipid droplets. The transfer direction may be driven by the internal pressure difference between the contacting lipid droplet pair. Promotes lipid exchange and lipid droplet fusion in both small and large lipid droplet-containing hepatocytes. In addition to its role in lipid droplet fusion, also involved in cytoplasmic vesicle biogenesis and transport. Required for very-low-density lipoprotein (VLDL) lipidation and maturation. Probably involved in the biogenesis of VLDL transport vesicles by forming a COPII vesicle coat and facilitating the formation of endoplasmic reticulum-derived large vesicles. Also involved in sterol-regulated export of the SCAP-SREBP complex, composed of SCAP, SREBF1/SREBP1 and SREBF2/SREBP2, by promoting loading of SCAP-SREBP into COPII vesicles. May also activate apoptosis. The sequence is that of Lipid transferase CIDEB (CIDEB) from Bos taurus (Bovine).